The following is a 233-amino-acid chain: Archaetidylserine synthase (233 aa).

8 consecutive transmembrane segments (helical) span residues 7-27 (ITSFIALPDLLSMLNASSGYL), 29-49 (ILLSIDGSLNAACILMLLAVL), 75-95 (SLSDVISFGVAPAILIYSAAV), 102-122 (ILVGPLIVLCGILRLSRFNVL), 126-146 (GKNFTGLPIPVAAVTISSFYL), 147-167 (TGFYSELSAAFIMIAVSVLMI), 180-200 (ASTALILIIATIISVAAVEIL), and 206-226 (VAGPVAIILFIATLTYIAVPI).

This sequence belongs to the CDP-alcohol phosphatidyltransferase class-I family.

Its subcellular location is the membrane. The catalysed reaction is CDP-2,3-bis-O-(geranylgeranyl)-sn-glycerol + L-serine = archaetidylserine + CMP + H(+). It catalyses the reaction CDP-2,3-bis-O-(phytanyl)-sn-glycerol + L-serine = 2,3-bis-O-phytanyl-sn-glycero-3-phospho-L-serine + CMP + H(+). The protein operates within membrane lipid metabolism; glycerophospholipid metabolism. Its activity is regulated as follows. Activated by Mn(2+) ions. In terms of biological role, involved in the lipid biosynthesis. Catalyzes the formation of unsaturated archaetidylserine from CDP-unsaturated archaeol and L-serine. Activity with ester-linked substrate analogs containing straight aliphatic chains (typical bacterial substrates) is two to three times higher than that with the corresponding ether-type substrate (typical archaeal substrates). Both enantiomers of CDP-unsaturated archaeols with ether-linked geranylgeranyl chains and CDP-saturated archaeol with ether-linked phytanyl chains are similarly active. The enzyme also accepts D-serine, although activity is only about third of that with L-serine. The polypeptide is Archaetidylserine synthase (Methanothermobacter thermautotrophicus (strain ATCC 29096 / DSM 1053 / JCM 10044 / NBRC 100330 / Delta H) (Methanobacterium thermoautotrophicum)).